We begin with the raw amino-acid sequence, 801 residues long: uncharacterized protein (801 aa).

A PE domain is found at 1 to 93 (MSWVMVSPEL…GGAYAAAEAA (93 aa)).

It belongs to the mycobacterial PE family. PGRS subfamily.

This is an uncharacterized protein from Mycobacterium tuberculosis (strain ATCC 25618 / H37Rv).